Here is a 185-residue protein sequence, read N- to C-terminus: Ribosome-recycling factor (185 aa).

It belongs to the RRF family.

It localises to the cytoplasm. Its function is as follows. Responsible for the release of ribosomes from messenger RNA at the termination of protein biosynthesis. May increase the efficiency of translation by recycling ribosomes from one round of translation to another. The chain is Ribosome-recycling factor from Xanthomonas campestris pv. campestris (strain 8004).